A 260-amino-acid chain; its full sequence is Indole-3-glycerol phosphate synthase (260 aa).

Belongs to the TrpC family.

It carries out the reaction 1-(2-carboxyphenylamino)-1-deoxy-D-ribulose 5-phosphate + H(+) = (1S,2R)-1-C-(indol-3-yl)glycerol 3-phosphate + CO2 + H2O. It participates in amino-acid biosynthesis; L-tryptophan biosynthesis; L-tryptophan from chorismate: step 4/5. This Neisseria meningitidis serogroup C / serotype 2a (strain ATCC 700532 / DSM 15464 / FAM18) protein is Indole-3-glycerol phosphate synthase.